Reading from the N-terminus, the 136-residue chain is Small ribosomal subunit protein uS11c (136 aa).

It belongs to the universal ribosomal protein uS11 family. Part of the 30S ribosomal subunit.

The protein resides in the plastid. The protein is Small ribosomal subunit protein uS11c of Epifagus virginiana (Beechdrops).